The primary structure comprises 423 residues: Pre-mRNA polyadenylation factor fip-1 (423 aa).

The span at 1-11 (MDIDEDEDFYA) shows a compositional bias: acidic residues. 3 disordered regions span residues 1 to 178 (MDID…PVRT), 278 to 307 (GPGG…GGPG), and 360 to 423 (PGGG…GRRW). A compositionally biased stretch (low complexity) spans 19–61 (PPTTAATTTTPATTTTTAAPTTTTTTTSTTTASAPPTTTSSST). Residues 65–90 (DELEEGEEEDEGGGAMDEDDDSDIDI) show a composition bias toward acidic residues. The segment covering 135–146 (GTNSNSNSSSNK) has biased composition (low complexity). A compositionally biased stretch (gly residues) spans 360–415 (PGGGPGGPGTGGMGPGGPGGQGGQGQQFGGGFGGNQGQGGYGGYDQMGGAGGGGRG).

The protein belongs to the FIP1 family.

The protein resides in the nucleus. Functionally, pre-mRNA polyadenylation factor that directly interacts with poly(A) polymerase. This is Pre-mRNA polyadenylation factor fip-1 (fip-1) from Neurospora crassa (strain ATCC 24698 / 74-OR23-1A / CBS 708.71 / DSM 1257 / FGSC 987).